Here is a 53-residue protein sequence, read N- to C-terminus: uncharacterized protein (53 aa).

Low complexity predominate over residues 14–33; the sequence is SPSSLNNNNNINSKSLQINS. The segment at 14 to 53 is disordered; sequence SPSSLNNNNNINSKSLQINSENKSKIQNNNPLGNKGGVQF.

This is an uncharacterized protein from Dictyostelium discoideum (Social amoeba).